Consider the following 192-residue polypeptide: Fe/S biogenesis protein NfuA (192 aa).

Positions 149 and 152 each coordinate [4Fe-4S] cluster.

The protein belongs to the NfuA family. As to quaternary structure, homodimer. Requires [4Fe-4S] cluster as cofactor.

Involved in iron-sulfur cluster biogenesis. Binds a 4Fe-4S cluster, can transfer this cluster to apoproteins, and thereby intervenes in the maturation of Fe/S proteins. Could also act as a scaffold/chaperone for damaged Fe/S proteins. The protein is Fe/S biogenesis protein NfuA of Shewanella amazonensis (strain ATCC BAA-1098 / SB2B).